Consider the following 208-residue polypeptide: 3-demethoxyubiquinol 3-hydroxylase (208 aa).

Fe cation contacts are provided by Glu-57, Glu-87, His-90, Glu-139, Glu-171, and His-174.

Belongs to the COQ7 family. The cofactor is Fe cation.

The protein resides in the cell membrane. The enzyme catalyses a 5-methoxy-2-methyl-3-(all-trans-polyprenyl)benzene-1,4-diol + AH2 + O2 = a 3-demethylubiquinol + A + H2O. It participates in cofactor biosynthesis; ubiquinone biosynthesis. Functionally, catalyzes the hydroxylation of 2-nonaprenyl-3-methyl-6-methoxy-1,4-benzoquinol during ubiquinone biosynthesis. The polypeptide is 3-demethoxyubiquinol 3-hydroxylase (Burkholderia ambifaria (strain ATCC BAA-244 / DSM 16087 / CCUG 44356 / LMG 19182 / AMMD) (Burkholderia cepacia (strain AMMD))).